Reading from the N-terminus, the 74-residue chain is uncharacterized protein (74 aa).

This is an uncharacterized protein from Salmonella typhimurium.